We begin with the raw amino-acid sequence, 600 residues long: Adenine deaminase 3 (600 aa).

This sequence belongs to the metallo-dependent hydrolases superfamily. Adenine deaminase family. It depends on Mn(2+) as a cofactor.

It catalyses the reaction adenine + H2O + H(+) = hypoxanthine + NH4(+). In Rhizobium johnstonii (strain DSM 114642 / LMG 32736 / 3841) (Rhizobium leguminosarum bv. viciae), this protein is Adenine deaminase 3.